We begin with the raw amino-acid sequence, 171 residues long: MTEKNQDAVTEEQGTEVVLQIQRIYVKDVSFEAPNLPHIFQQEWKPKLDFNLSTETTHLAEDLYEVCLNISVETTMEGSEDVAFICEVKQAGIFAISGLEDVQLAHCLTSQCPNMLFPYARELISSLVNRGTFPALNLAPVNFDALFVEYMQRQQAQEESKTEEKEKKEVH.

It belongs to the SecB family. Homotetramer, a dimer of dimers. One homotetramer interacts with 1 SecA dimer.

The protein localises to the cytoplasm. In terms of biological role, one of the proteins required for the normal export of preproteins out of the cell cytoplasm. It is a molecular chaperone that binds to a subset of precursor proteins, maintaining them in a translocation-competent state. It also specifically binds to its receptor SecA. The chain is Protein-export protein SecB from Histophilus somni (strain 2336) (Haemophilus somnus).